The chain runs to 202 residues: Small ribosomal subunit protein uS4c (202 aa).

In terms of domain architecture, S4 RNA-binding spans methionine 90–asparagine 154.

This sequence belongs to the universal ribosomal protein uS4 family. As to quaternary structure, part of the 30S ribosomal subunit. Contacts protein S5. The interaction surface between S4 and S5 is involved in control of translational fidelity.

The protein localises to the plastid. It is found in the chloroplast. Functionally, one of the primary rRNA binding proteins, it binds directly to 16S rRNA where it nucleates assembly of the body of the 30S subunit. Its function is as follows. With S5 and S12 plays an important role in translational accuracy. The sequence is that of Small ribosomal subunit protein uS4c (rps4) from Monoclea forsteri (Liverwort).